The primary structure comprises 962 residues: Glycine dehydrogenase (decarboxylating) (962 aa).

Lysine 709 is modified (N6-(pyridoxal phosphate)lysine).

This sequence belongs to the GcvP family. In terms of assembly, the glycine cleavage system is composed of four proteins: P, T, L and H. Pyridoxal 5'-phosphate is required as a cofactor.

It carries out the reaction N(6)-[(R)-lipoyl]-L-lysyl-[glycine-cleavage complex H protein] + glycine + H(+) = N(6)-[(R)-S(8)-aminomethyldihydrolipoyl]-L-lysyl-[glycine-cleavage complex H protein] + CO2. Its function is as follows. The glycine cleavage system catalyzes the degradation of glycine. The P protein binds the alpha-amino group of glycine through its pyridoxal phosphate cofactor; CO(2) is released and the remaining methylamine moiety is then transferred to the lipoamide cofactor of the H protein. The chain is Glycine dehydrogenase (decarboxylating) from Shewanella baltica (strain OS195).